A 149-amino-acid polypeptide reads, in one-letter code: Large ribosomal subunit protein bL9 (149 aa).

The protein belongs to the bacterial ribosomal protein bL9 family.

In terms of biological role, binds to the 23S rRNA. The polypeptide is Large ribosomal subunit protein bL9 (Edwardsiella ictaluri (strain 93-146)).